The primary structure comprises 542 residues: CTP synthase (542 aa).

The interval methionine 1–leucine 269 is amidoligase domain. A CTP-binding site is contributed by serine 14. Serine 14 contacts UTP. ATP-binding positions include serine 15 to leucine 20 and aspartate 72. 2 residues coordinate Mg(2+): aspartate 72 and glutamate 143. CTP-binding positions include aspartate 150–glutamate 152, lysine 189–glutamine 194, and lysine 225. UTP is bound by residues lysine 189–glutamine 194 and lysine 225. Lysine 241 to valine 243 lines the ATP pocket. One can recognise a Glutamine amidotransferase type-1 domain in the interval tyrosine 301–serine 538. An L-glutamine-binding site is contributed by glycine 358. Cysteine 385 acts as the Nucleophile; for glutamine hydrolysis in catalysis. L-glutamine is bound by residues leucine 386 to glutamine 389, glutamate 409, and arginine 466. Active-site residues include histidine 511 and glutamate 513.

Belongs to the CTP synthase family. As to quaternary structure, homotetramer.

It catalyses the reaction UTP + L-glutamine + ATP + H2O = CTP + L-glutamate + ADP + phosphate + 2 H(+). It carries out the reaction L-glutamine + H2O = L-glutamate + NH4(+). The enzyme catalyses UTP + NH4(+) + ATP = CTP + ADP + phosphate + 2 H(+). It functions in the pathway pyrimidine metabolism; CTP biosynthesis via de novo pathway; CTP from UDP: step 2/2. Allosterically activated by GTP, when glutamine is the substrate; GTP has no effect on the reaction when ammonia is the substrate. The allosteric effector GTP functions by stabilizing the protein conformation that binds the tetrahedral intermediate(s) formed during glutamine hydrolysis. Inhibited by the product CTP, via allosteric rather than competitive inhibition. Functionally, catalyzes the ATP-dependent amination of UTP to CTP with either L-glutamine or ammonia as the source of nitrogen. Regulates intracellular CTP levels through interactions with the four ribonucleotide triphosphates. This chain is CTP synthase, found in Protochlamydia amoebophila (strain UWE25).